The following is a 365-amino-acid chain: Major capsid protein (365 aa).

The propeptide occupies 1–48 (MANKITTFLSGQTGKQISNIDLLNSIRTRASADYQADIPVLEGARINH).

It is found in the virion. Functionally, assembles to form an icosahedral capsid. This chain is Major capsid protein (9), found in Streptococcus phage Cp-1 (Bacteriophage Cp-1).